We begin with the raw amino-acid sequence, 422 residues long: MGLSYQLLLCLLLCGGAKQCCSQPLWLLPGGTPTPGKLTSSVEVECLEAELVVTVSRDLFGTGKLIQPEDLTLGSENCRPLVSVATDVVRFKAQLHECSNRVQVTEDALVYSTVLLHQPRPVPGLSILRTNRADVPIECRYPRQGNVSSHAIRPTWVPFSTTVSSEEKLVFSLRLMEENWNTEKLSPTSHLGEVAYLQAEVQTGSHLPLLLFVDRCVPTPSPDQTASPYHVIVDFHGCLVDGLSESFSAFQVPRPRPETLQFTVDVFHFANSSRNTIYITCHLKVTPANQTPDELNKACSFNRSSKSWSPVEGDAEVCGCCSSGDCGSSSRSRYQAHGVSQWPKSASRRRRHVRDEADVTVGPLIFLGKASDQAVEGWASSAQTSLALGLGLAAVAFLTLAAIVLGVTRSCHTPSHVVSLSQ.

The N-terminal stretch at 1 to 22 is a signal peptide; the sequence is MGLSYQLLLCLLLCGGAKQCCS. The residue at position 23 (Gln-23) is a Pyrrolidone carboxylic acid. Topologically, residues 23–386 are extracellular; it reads QPLWLLPGGT…GWASSAQTSL (364 aa). Thr-32 and Thr-34 each carry an O-linked (GalNAc...) threonine glycan. The region spanning 45-306 is the ZP domain; it reads ECLEAELVVT…KACSFNRSSK (262 aa). 2 disulfide bridges follow: Cys-46-Cys-139 and Cys-78-Cys-98. Asn-146 is a glycosylation site (N-linked (GlcNAc...) asparagine). O-linked (GalNAc...) threonine glycans are attached at residues Thr-155, Thr-161, and Thr-162. Disulfide bonds link Cys-216/Cys-281 and Cys-238/Cys-299. 2 N-linked (GlcNAc...) asparagine glycosylation sites follow: Asn-271 and Asn-302. Residues 350-422 constitute a propeptide, removed in mature form; it reads RRHVRDEADV…TPSHVVSLSQ (73 aa). The chain crosses the membrane as a helical span at residues 387-407; the sequence is ALGLGLAAVAFLTLAAIVLGV. At 408–422 the chain is on the cytoplasmic side; the sequence is TRSCHTPSHVVSLSQ.

This sequence belongs to the ZP domain family. ZPC subfamily. In terms of assembly, polymers of ZP2 and ZP3 organized into long filaments cross-linked by ZP1 homodimers. Interacts with ZP1 and ZP2. In terms of processing, proteolytically cleaved before the transmembrane segment to yield the secreted ectodomain incorporated in the zona pellucida. N-glycosylated. Post-translationally, O-glycosylated; removal of O-linked glycans may play an important role in the post-fertilization block to polyspermy. Expressed in oocytes.

The protein resides in the zona pellucida. It is found in the cell membrane. In terms of biological role, component of the zona pellucida, an extracellular matrix surrounding oocytes which mediates sperm binding, induction of the acrosome reaction and prevents post-fertilization polyspermy. The zona pellucida is composed of 3 to 4 glycoproteins, ZP1, ZP2, ZP3, and ZP4. ZP3 is essential for sperm binding and zona matrix formation. This is Zona pellucida sperm-binding protein 3 (ZP3) from Mesocricetus auratus (Golden hamster).